A 183-amino-acid chain; its full sequence is uncharacterized protein (183 aa).

Disordered stretches follow at residues 1 to 44 (MPFY…VMTA), 68 to 137 (GRAG…LGLR), and 163 to 183 (RDDP…VWPE).

This is an uncharacterized protein from Dryophytes versicolor (chameleon treefrog).